Consider the following 139-residue polypeptide: Large ribosomal subunit protein uL16 (139 aa).

Belongs to the universal ribosomal protein uL16 family. In terms of assembly, part of the 50S ribosomal subunit.

Functionally, binds 23S rRNA and is also seen to make contacts with the A and possibly P site tRNAs. This is Large ribosomal subunit protein uL16 from Rippkaea orientalis (strain PCC 8801 / RF-1) (Cyanothece sp. (strain PCC 8801)).